Consider the following 143-residue polypeptide: Large ribosomal subunit protein uL13 (143 aa).

This sequence belongs to the universal ribosomal protein uL13 family. As to quaternary structure, part of the 50S ribosomal subunit.

This protein is one of the early assembly proteins of the 50S ribosomal subunit, although it is not seen to bind rRNA by itself. It is important during the early stages of 50S assembly. This chain is Large ribosomal subunit protein uL13, found in Coprothermobacter proteolyticus (strain ATCC 35245 / DSM 5265 / OCM 4 / BT).